We begin with the raw amino-acid sequence, 173 residues long: Bifunctional protein PyrR (173 aa).

A PRPP-binding motif is present at residues 93-105; it reads VILIDDVLYTGRT.

The protein belongs to the purine/pyrimidine phosphoribosyltransferase family. PyrR subfamily. In terms of assembly, homodimer and homohexamer; in equilibrium.

It carries out the reaction UMP + diphosphate = 5-phospho-alpha-D-ribose 1-diphosphate + uracil. In terms of biological role, regulates transcriptional attenuation of the pyrimidine nucleotide (pyr) operon by binding in a uridine-dependent manner to specific sites on pyr mRNA. This disrupts an antiterminator hairpin in the RNA and favors formation of a downstream transcription terminator, leading to a reduced expression of downstream genes. Functionally, also displays a weak uracil phosphoribosyltransferase activity which is not physiologically significant. The polypeptide is Bifunctional protein PyrR (Streptococcus pyogenes serotype M12 (strain MGAS2096)).